We begin with the raw amino-acid sequence, 668 residues long: DNA damage-responsive serine/threonine-protein kinase RqkA (668 aa).

The Protein kinase domain occupies 13–272 (YELLALLGEG…SGAALAHLWA (260 aa)). Residues 19 to 27 (LGEGGSAQV) and lysine 42 each bind ATP. Aspartate 137 functions as the Proton acceptor in the catalytic mechanism.

Belongs to the protein kinase superfamily. Ser/Thr protein kinase family. The cofactor is pyrroloquinoline quinone. Autophosphorylated.

The enzyme catalyses L-seryl-[protein] + ATP = O-phospho-L-seryl-[protein] + ADP + H(+). The catalysed reaction is L-threonyl-[protein] + ATP = O-phospho-L-threonyl-[protein] + ADP + H(+). Its activity is regulated as follows. Autokinase activity is stimulated by DNA damage. Stimulated by PQQ and DNA ends in vitro. Functionally, plays an important role in radiation resistance and DNA double-strand break (DSB) repair. Involved in transcriptional regulation of genes important for bacterial stress response. Phosphorylates PprA in vitro. This is DNA damage-responsive serine/threonine-protein kinase RqkA (rqkA) from Deinococcus radiodurans (strain ATCC 13939 / DSM 20539 / JCM 16871 / CCUG 27074 / LMG 4051 / NBRC 15346 / NCIMB 9279 / VKM B-1422 / R1).